The primary structure comprises 152 residues: Interleukin-2 (152 aa).

An N-terminal signal peptide occupies residues 1–20; it reads MYRMQLLSCIALTLALVANG. Thr23 carries an O-linked (GalNAc...) threonine glycan. Cysteines 78 and 126 form a disulfide.

This sequence belongs to the IL-2 family.

The protein resides in the secreted. Cytokine produced by activated CD4-positive helper T-cells and to a lesser extend activated CD8-positive T-cells and natural killer (NK) cells that plays pivotal roles in the immune response and tolerance. Binds to a receptor complex composed of either the high-affinity trimeric IL-2R (IL2RA/CD25, IL2RB/CD122 and IL2RG/CD132) or the low-affinity dimeric IL-2R (IL2RB and IL2RG). Interaction with the receptor leads to oligomerization and conformation changes in the IL-2R subunits resulting in downstream signaling starting with phosphorylation of JAK1 and JAK3. In turn, JAK1 and JAK3 phosphorylate the receptor to form a docking site leading to the phosphorylation of several substrates including STAT5. This process leads to activation of several pathways including STAT, phosphoinositide-3-kinase/PI3K and mitogen-activated protein kinase/MAPK pathways. Functions as a T-cell growth factor and can increase NK-cell cytolytic activity as well. Promotes strong proliferation of activated B-cells and subsequently immunoglobulin production. Plays a pivotal role in regulating the adaptive immune system by controlling the survival and proliferation of regulatory T-cells, which are required for the maintenance of immune tolerance. Moreover, participates in the differentiation and homeostasis of effector T-cell subsets, including Th1, Th2, Th17 as well as memory CD8-positive T-cells. This Orcinus orca (Killer whale) protein is Interleukin-2 (IL2).